The primary structure comprises 165 residues: CDP-archaeol synthase (165 aa).

Helical transmembrane passes span 41–61 (GLICGVLAGVLIGLVQIWLVG), 72–92 (ILSVTLLALGALLGDMGKSFI), 103–123 (AWPVADQYDLVVGAFLLTIIF), and 127–147 (WFFAVVTLPVLIAILVITPVL).

It belongs to the CDP-archaeol synthase family. Mg(2+) serves as cofactor.

It localises to the cell membrane. It carries out the reaction 2,3-bis-O-(geranylgeranyl)-sn-glycerol 1-phosphate + CTP + H(+) = CDP-2,3-bis-O-(geranylgeranyl)-sn-glycerol + diphosphate. It functions in the pathway membrane lipid metabolism; glycerophospholipid metabolism. In terms of biological role, catalyzes the formation of CDP-2,3-bis-(O-geranylgeranyl)-sn-glycerol (CDP-archaeol) from 2,3-bis-(O-geranylgeranyl)-sn-glycerol 1-phosphate (DGGGP) and CTP. This reaction is the third ether-bond-formation step in the biosynthesis of archaeal membrane lipids. The polypeptide is CDP-archaeol synthase (Methanoregula boonei (strain DSM 21154 / JCM 14090 / 6A8)).